Reading from the N-terminus, the 124-residue chain is Large-conductance mechanosensitive channel (124 aa).

Helical transmembrane passes span 14–34 (VIDL…VQSL), 37–57 (NLIN…NLVF), and 67–87 (GSFI…FLIV).

It belongs to the MscL family. In terms of assembly, homopentamer.

The protein resides in the cell membrane. Its function is as follows. Channel that opens in response to stretch forces in the membrane lipid bilayer. May participate in the regulation of osmotic pressure changes within the cell. In Lactobacillus acidophilus (strain ATCC 700396 / NCK56 / N2 / NCFM), this protein is Large-conductance mechanosensitive channel.